A 142-amino-acid chain; its full sequence is MANERTLSIIKPDAVAKNVIGEIYSRFEKADLKIVAAKMMHLTQEQAEGFYAEHKERPFFNDLVAFMTSGPVVVQVLEGEGAILKNRELMGATNPKEAEAGTIRADFASSIDANAVHGSDSAASAEREVAYFFNDNEICPRG.

ATP is bound by residues Lys11, Phe59, Arg87, Thr93, Arg104, and Asn114. Residue His117 is the Pros-phosphohistidine intermediate of the active site.

Belongs to the NDK family. Homotetramer. The cofactor is Mg(2+).

Its subcellular location is the cytoplasm. It catalyses the reaction a 2'-deoxyribonucleoside 5'-diphosphate + ATP = a 2'-deoxyribonucleoside 5'-triphosphate + ADP. The catalysed reaction is a ribonucleoside 5'-diphosphate + ATP = a ribonucleoside 5'-triphosphate + ADP. In terms of biological role, major role in the synthesis of nucleoside triphosphates other than ATP. The ATP gamma phosphate is transferred to the NDP beta phosphate via a ping-pong mechanism, using a phosphorylated active-site intermediate. This is Nucleoside diphosphate kinase from Marinobacter nauticus (strain ATCC 700491 / DSM 11845 / VT8) (Marinobacter aquaeolei).